Here is a 912-residue protein sequence, read N- to C-terminus: Translation initiation factor IF-2 (912 aa).

The segment at 26-297 (SDQGEFVKSA…RGRKSKRAKR (272 aa)) is disordered. A compositionally biased stretch (low complexity) spans 56-74 (KPAPAASNGAAAEAAAPPK). Residues 100 to 120 (APEPPAAPAAPAAPAPKPSPA) are compositionally biased toward pro residues. The segment covering 121-131 (ARPAAAEAAAP) has biased composition (low complexity). 3 stretches are compositionally biased toward pro residues: residues 132–152 (APAP…PGAP), 173–183 (PRPQAPRPGAP), and 192–218 (NMPP…PGGG). Positions 219–283 (PRPGGAGRPG…GAAGAFGRPG (65 aa)) are enriched in gly residues. Over residues 287–296 (KRGRKSKRAK) the composition is skewed to basic residues. The tr-type G domain maps to 408 to 579 (TRPPVVTVMG…AVLLTADAAL (172 aa)). Residues 417–424 (GHVDHGKT) are G1. 417-424 (GHVDHGKT) serves as a coordination point for GTP. The interval 442 to 446 (GITQH) is G2. Residues 467–470 (DTPG) form a G3 region. GTP-binding positions include 467-471 (DTPGH) and 521-524 (NKID). The interval 521 to 524 (NKID) is G4. The G5 stretch occupies residues 557 to 559 (SAR).

This sequence belongs to the TRAFAC class translation factor GTPase superfamily. Classic translation factor GTPase family. IF-2 subfamily.

Its subcellular location is the cytoplasm. One of the essential components for the initiation of protein synthesis. Protects formylmethionyl-tRNA from spontaneous hydrolysis and promotes its binding to the 30S ribosomal subunits. Also involved in the hydrolysis of GTP during the formation of the 70S ribosomal complex. This is Translation initiation factor IF-2 from Mycobacteroides abscessus (strain ATCC 19977 / DSM 44196 / CCUG 20993 / CIP 104536 / JCM 13569 / NCTC 13031 / TMC 1543 / L948) (Mycobacterium abscessus).